The chain runs to 152 residues: Large ribosomal subunit protein uL15 (152 aa).

Residues 1 to 57 (MTSTLNTLKSNSGSRKKKLRKGRGIAAGQGASCGFGMRGQKSRSGRPTRPGFEGGQM) form a disordered region. Positions 14 to 23 (SRKKKLRKGR) are enriched in basic residues. Over residues 25–37 (IAAGQGASCGFGM) the composition is skewed to gly residues.

The protein belongs to the universal ribosomal protein uL15 family. As to quaternary structure, part of the 50S ribosomal subunit.

Its function is as follows. Binds to the 23S rRNA. The protein is Large ribosomal subunit protein uL15 of Prochlorococcus marinus (strain MIT 9301).